Consider the following 505-residue polypeptide: ATP-dependent RNA helicase HAS1 (505 aa).

A disordered region spans residues Met1–Gln37. Ser12 is modified (phosphoserine). The span at Ser26–Gln37 shows a compositional bias: polar residues. The short motif at Glu42–Ala70 is the Q motif element. Residues Ile73–Phe249 form the Helicase ATP-binding domain. Ala86–Thr93 provides a ligand contact to ATP. The DEAD box signature appears at Asp196–Asp199. The 171-residue stretch at Gly263 to Ile433 folds into the Helicase C-terminal domain. Positions Lys275–Lys291 match the Bipartite nuclear localization signal motif.

This sequence belongs to the DEAD box helicase family. DDX18/HAS1 subfamily. Interacts with RRP1. Associates in the nucleolus with the 60S and pre-60S ribosomal subunits. It has also been isolated with the nuclear pore complex. Phosphorylated by CDK1.

It is found in the nucleus. The protein localises to the nucleolus. It carries out the reaction ATP + H2O = ADP + phosphate + H(+). Functionally, ATP-dependent RNA helicase involved in 40S ribosomal subunit biogenesis. Required for the processing and cleavage of 35S pre-rRNA at sites A0, A1, and A2, leading to mature 18S rRNA. This chain is ATP-dependent RNA helicase HAS1 (HAS1), found in Saccharomyces cerevisiae (strain ATCC 204508 / S288c) (Baker's yeast).